The sequence spans 246 residues: Flagellar L-ring protein (246 aa).

The first 20 residues, Met1–Ala20, serve as a signal peptide directing secretion. The N-palmitoyl cysteine moiety is linked to residue Cys21. The S-diacylglycerol cysteine moiety is linked to residue Cys21.

Belongs to the FlgH family. In terms of assembly, the basal body constitutes a major portion of the flagellar organelle and consists of four rings (L,P,S, and M) mounted on a central rod.

The protein localises to the cell outer membrane. It is found in the bacterial flagellum basal body. Assembles around the rod to form the L-ring and probably protects the motor/basal body from shearing forces during rotation. This Ruegeria pomeroyi (strain ATCC 700808 / DSM 15171 / DSS-3) (Silicibacter pomeroyi) protein is Flagellar L-ring protein.